Consider the following 814-residue polypeptide: Phosphatidylinositol 3-kinase VPS34 (814 aa).

Positions 25–177 (LDGNLPVKKS…EKLMNKYERG (153 aa)) constitute a C2 PI3K-type domain. The PIK helical domain occupies 274–449 (DRDLKPSNIE…YSTYELLEEN (176 aa)). A PI3K/PI4K catalytic domain is found at 532–799 (VAGESSLFKS…LINESVSALF (268 aa)). The segment at 538–544 (LFKSALH) is G-loop. The catalytic loop stretch occupies residues 668 to 676 (GIGDRHLDN). The tract at residues 687–708 (HVDFAFILGRDPKPFPPPMKLC) is activation loop.

It belongs to the PI3/PI4-kinase family. Interacts with VPS15. Component of a complex made of VPS38/USL1 and PI3K main subunits such as VPS15, ATG6/VPS30 and VPS34. Binds directly to VPS38/USL1.

It catalyses the reaction a 1,2-diacyl-sn-glycero-3-phospho-(1D-myo-inositol) + ATP = a 1,2-diacyl-sn-glycero-3-phospho-(1D-myo-inositol-3-phosphate) + ADP + H(+). Its activity is regulated as follows. The PI3K inhibitor LY294002 affects phosphatidylinositol 3-phosphate (PI3P) levels and triggers a decrease in proline, hydrophobic and aromatic amino acids, and sugars (e.g. raffinose) accumulation in response to salt treatment correlated with lower P5CS1 expression and higher ProDH1 expression, genes involved in proline biosynthesis and catabolism, respectively. Involved in the negative regulation of proline, hydrophobic and aromatic amino acids accumulation, especially in response to salt (NaCl), either through inhibition of their synthesis and/or promotion of their catabolism. Triggers defense responses (e.g. pathogenesis related (PR1 and PR5) gene expression and hydrogen peroxide H(2)O(2) burst) to the bacterial pathogen compatible Pseudomonas syringae pv tomato DC3000 (Pst DC3000) and incompatible Pst DC3000 (avrRpt2), by regulating reactive ogygen species (ROS) production and by promoting stomatal closure. This Arabidopsis thaliana (Mouse-ear cress) protein is Phosphatidylinositol 3-kinase VPS34.